The following is a 1063-amino-acid chain: Structural polyprotein (1063 aa).

The segment at 1-131 (MASTTPITME…LGPPTNPFQA (131 aa)) is disordered. Low complexity predominate over residues 18–34 (AQSRALRAGLAAGASQS). A human C1QBP/SF2P32-binding region spans residues 30 to 69 (GASQSRRPRPPRQRDSSTSGDDSGRDSGGPRRRRGNRGRG). Ser-46 carries the phosphoserine; by host modification. Residues 59–69 (PRRRRGNRGRG) show a composition bias toward basic residues. The span at 70 to 87 (QRKDWSRAPPPPEERQES) shows a compositional bias: basic and acidic residues. Over residues 93–107 (APKPSRAPPQQPQPP) the composition is skewed to pro residues. Cysteines 153 and 197 form a disulfide. Residues 279–300 (GAPQAFLAGLLLAAVAVGTARA) form a functions as E2 signal peptide region. Topologically, residues 301 to 534 (GLQPRADMAA…LWLATANALS (234 aa)) are extracellular. Residues Asn-353, Asn-371, Asn-410, and Asn-429 are each glycosylated (N-linked (GlcNAc...) asparagine; by host). A helical membrane pass occupies residues 535 to 555 (LDHAFAAFVLLVPWVLIFMVC). Residues 556–582 (RRACRRRGAAAALTAVVLQGYNPPAYG) lie on the Cytoplasmic side of the membrane. The tract at residues 563–582 (GAAAALTAVVLQGYNPPAYG) is functions as E1 signal peptide. The Extracellular portion of the chain corresponds to 583 to 1028 (EEAFTYLCTA…QTWAEWAAAH (446 aa)). Intrachain disulfides connect Cys-590–Cys-595, Cys-619–Cys-824, Cys-641–Cys-653, Cys-699–Cys-712, Cys-758–Cys-767, Cys-807–Cys-817, Cys-931–Cys-934, and Cys-950–Cys-983. N-linked (GlcNAc...) asparagine; by host glycosylation is present at Asn-658. Ca(2+) contacts are provided by Asn-670 and Ala-671. The Ca(2+) site is built by Asp-718 and Thr-719. Residues Asn-759 and Asn-791 are each glycosylated (N-linked (GlcNAc...) asparagine; by host). O-linked (GalNAc...) threonine; by host glycans are attached at residues Thr-1011 and Thr-1012. A helical transmembrane segment spans residues 1029 to 1049 (WWQLTLGAICALLLAGLLACC). Over 1050-1063 (AKCLYYLRGAIAPR) the chain is Cytoplasmic.

In terms of assembly, homodimer; further assembles into homooligomer. Interacts with human C1QBP. Interacts (via N-terminus) with protease/methyltransferase p150. As to quaternary structure, heterodimer with spike glycoprotein E2. Heterodimer with spike glycoprotein E1. Post-translationally, structural polyprotein: Specific enzymatic cleavages in vivo yield mature proteins. Two signal peptidase-mediated cleavages within the polyprotein produce the structural proteins capsid, E2, and E1. The E2 signal peptide remains attached to the C-terminus of the capsid protein after cleavage by the signal peptidase. Another signal peptide at E2 C-terminus directs E1 to the ER, with a similar mechanism. Contains three N-linked oligosaccharides. In terms of processing, capsid is phosphorylated on Ser-46 by host. This phosphorylation negatively regulates capsid protein RNA-binding activity. Dephosphorylated by human PP1A.

Its subcellular location is the virion. It localises to the host cytoplasm. It is found in the host mitochondrion. The protein localises to the virion membrane. The protein resides in the host Golgi apparatus membrane. Capsid protein interacts with genomic RNA and assembles into icosahedric core particles 65-70 nm in diameter. The resulting nucleocapsid eventually associates with the cytoplasmic domain of E2 at the cell membrane, leading to budding and formation of mature virions from host Golgi membranes. Phosphorylation negatively regulates RNA-binding activity, possibly delaying virion assembly during the viral replication phase. Capsid protein dimerizes and becomes disulfide-linked in the virion. Modulates genomic RNA replication. Modulates subgenomic RNA synthesis by interacting with human C1QBP/SF2P32. Induces both perinuclear clustering of mitochondria and the formation of electron-dense intermitochondrial plaques, both hallmarks of rubella virus infected cells. Induces apoptosis when expressed in transfected cells. Its function is as follows. Responsible for viral attachment to target host cell, by binding to the cell receptor. Its transport to the plasma membrane depends on interaction with E1 protein. The surface glycoproteins display an irregular helical organization and a pseudo-tetrameric inner nucleocapsid arrangement. Functionally, class II viral fusion protein. Fusion activity is inactive as long as E1 is bound to E2 in mature virion. After virus attachment to target cell and clathrin-mediated endocytosis, acidification of the endosome would induce dissociation of E1/E2 heterodimer and concomitant trimerization of the E1 subunits. This E1 homotrimer is fusion active, and promotes release of viral nucleocapsid in cytoplasm after endosome and viral membrane fusion. The cytoplasmic tail of spike glycoprotein E1 modulates virus release. The surface glycoproteins display an irregular helical organization and a pseudo-tetrameric inner nucleocapsid arrangement. The chain is Structural polyprotein from Homo sapiens (Human).